We begin with the raw amino-acid sequence, 260 residues long: Exosome complex component Rrp4 (260 aa).

The S1 motif domain maps to 59–128 (NDVVIGVVIV…SSMKIELALR (70 aa)). The KH domain occupies 136-194 (RTGQIVEVEPVKVPRVIGHGGSMISMLKKETNCSIFVGQNGRIWIDGKDEDIELLSKAL).

The protein belongs to the RRP4 family. Component of the archaeal exosome complex. Forms a trimer of Rrp4 and/or Csl4 subunits. The trimer associates with a hexameric ring-like arrangement composed of 3 Rrp41-Rrp42 heterodimers.

The protein localises to the cytoplasm. Functionally, non-catalytic component of the exosome, which is a complex involved in RNA degradation. Increases the RNA binding and the efficiency of RNA degradation. Confers strong poly(A) specificity to the exosome. The polypeptide is Exosome complex component Rrp4 (Methanosarcina mazei (strain ATCC BAA-159 / DSM 3647 / Goe1 / Go1 / JCM 11833 / OCM 88) (Methanosarcina frisia)).